Reading from the N-terminus, the 278-residue chain is Ras-related protein rapC (278 aa).

10–17 contributes to the GTP binding site; the sequence is GASGTGKT. Residues 32 to 40 carry the Effector region motif; that stretch reads YDPTIEDLY. Residues 58–62 and 119–122 each bind GTP; these read DTSGT and NKCD. Disordered stretches follow at residues 176-209 and 236-278; these read NGSSNGKDKKDKKEKKTHKKDSGSNNSSINSSSS and STSS…CLIM. Composition is skewed to low complexity over residues 198 to 209 and 236 to 251; these read GSNNSSINSSSS and STSSTSVNNLNQSQTN. At cysteine 275 the chain carries Cysteine methyl ester. A lipid anchor (S-geranylgeranyl cysteine) is attached at cysteine 275. Positions 276 to 278 are cleaved as a propeptide — removed in mature form; the sequence is LIM.

The protein belongs to the small GTPase superfamily. Ras family.

The protein resides in the cell membrane. The enzyme catalyses GTP + H2O = GDP + phosphate + H(+). This chain is Ras-related protein rapC (rapC), found in Dictyostelium discoideum (Social amoeba).